A 224-amino-acid polypeptide reads, in one-letter code: 7-cyano-7-deazaguanine synthase (224 aa).

Residue cysteine 8 to alanine 18 coordinates ATP. Residues cysteine 190, cysteine 198, cysteine 201, and cysteine 204 each coordinate Zn(2+).

It belongs to the QueC family. Zn(2+) serves as cofactor.

It carries out the reaction 7-carboxy-7-deazaguanine + NH4(+) + ATP = 7-cyano-7-deazaguanine + ADP + phosphate + H2O + H(+). The protein operates within purine metabolism; 7-cyano-7-deazaguanine biosynthesis. Its function is as follows. Catalyzes the ATP-dependent conversion of 7-carboxy-7-deazaguanine (CDG) to 7-cyano-7-deazaguanine (preQ(0)). This is 7-cyano-7-deazaguanine synthase from Methanothrix thermoacetophila (strain DSM 6194 / JCM 14653 / NBRC 101360 / PT) (Methanosaeta thermophila).